Consider the following 1374-residue polypeptide: Serine/threonine-protein kinase LMTK1 (1374 aa).

The chain crosses the membrane as a helical span at residues 32 to 52 (LAVVAVSFSGLFAVIVLMLAC). The Protein kinase domain maps to 125-395 (LLYLKEIGRG…PTAEEVHLLL (271 aa)). ATP is bound by residues 131 to 139 (IGRGWFGKV) and K156. Catalysis depends on D253, which acts as the Proton acceptor. Residue S495 is modified to Phosphoserine. 5 disordered regions span residues 542–622 (GHDP…LAEG), 667–731 (VGAR…LLGL), 765–1195 (WTET…PAVP), 1245–1302 (QESP…AWDD), and 1320–1374 (AAPA…SKEA). The span at 606–620 (PSRSPSPSAGPLSLA) shows a compositional bias: low complexity. Over residues 680–690 (SNVSANNNSGS) the composition is skewed to polar residues. 3 stretches are compositionally biased toward low complexity: residues 719–731 (PEPG…LLGL), 801–831 (SPSQ…TPAT), and 847–856 (SSSSPEVEAP). Polar residues predominate over residues 865 to 878 (EATSGIFTDTSSDG). Low complexity predominate over residues 900-914 (PDSLDSLDIPSSASD). The segment covering 978-987 (RLSTSLSGLN) has biased composition (polar residues). At S1029 the chain carries Phosphoserine. Residues 1063–1073 (EGSSPEPSTCP) are compositionally biased toward polar residues. A compositionally biased stretch (low complexity) spans 1138 to 1155 (TPRAPLRLALPGLPAALE). The segment covering 1158 to 1173 (PEEEEEDSEDSDESDE) has biased composition (acidic residues). Phosphoserine occurs at positions 1168, 1171, 1184, 1187, and 1262. Residues 1272–1291 (GSPSAPNRPQQADGSPNGST) are compositionally biased toward polar residues. Residues 1321–1332 (APAPAAPTPTPA) are compositionally biased toward pro residues. Positions 1337–1352 (FTVSPAPTSRFSITHV) are enriched in polar residues. A compositionally biased stretch (basic and acidic residues) spans 1353–1363 (SDSDAESKRGP). Gly residues predominate over residues 1365–1374 (AGAGGESKEA).

This sequence belongs to the protein kinase superfamily. Tyr protein kinase family. Interacts with CDK5. Post-translationally, autophosphorylated. Phosphorylated by CDK5. As to expression, expressed in brain.

It localises to the membrane. It is found in the cytoplasm. The protein resides in the perinuclear region. It carries out the reaction L-seryl-[protein] + ATP = O-phospho-L-seryl-[protein] + ADP + H(+). The enzyme catalyses L-threonyl-[protein] + ATP = O-phospho-L-threonyl-[protein] + ADP + H(+). May be involved in neuronal differentiation. This chain is Serine/threonine-protein kinase LMTK1 (AATK), found in Homo sapiens (Human).